The primary structure comprises 553 residues: Zinc finger CCHC domain-containing protein 8 homolog (553 aa).

Ser-59 is modified (phosphoserine). The CCHC-type zinc-finger motif lies at 183 to 200; sequence SSCFNCGDTEHSLRDCTK. A phosphoserine mark is found at Ser-292 and Ser-347. Tyr-356 bears the Phosphotyrosine mark. A disordered region spans residues 388-492; it reads LEEETEDPPL…APSTPFKASY (105 aa). The segment covering 395 to 409 has biased composition (pro residues); sequence PPLPPSVPPPQPPPP. Ser-421 and Ser-423 each carry phosphoserine. 2 stretches are compositionally biased toward polar residues: residues 444–456 and 473–485; these read ASHN…SKSP and ESGN…SAPS.

Belongs to the ZCCHC8 family.

The protein resides in the nucleus. Its subcellular location is the nucleoplasm. In terms of biological role, scaffolding subunit of the trimeric nuclear exosome targeting (NEXT) complex, a complex that directs a subset of non-coding short-lived RNAs for exosomal degradation. The RNA exosome is fundamental for the degradation of RNA in eukaryotic nuclei. May be involved in pre-mRNA splicing. This Drosophila melanogaster (Fruit fly) protein is Zinc finger CCHC domain-containing protein 8 homolog.